The sequence spans 63 residues: Large ribosomal subunit protein uL30 (63 aa).

Belongs to the universal ribosomal protein uL30 family. As to quaternary structure, part of the 50S ribosomal subunit.

In Stenotrophomonas maltophilia (strain K279a), this protein is Large ribosomal subunit protein uL30.